Reading from the N-terminus, the 250-residue chain is Adenosine 5'-phosphosulfate reductase (250 aa).

Positions 119, 120, 202, and 205 each coordinate [4Fe-4S] cluster. The active-site Nucleophile; cysteine thiosulfonate intermediate is Cys230.

Belongs to the PAPS reductase family. CysH subfamily. Requires [4Fe-4S] cluster as cofactor.

The protein localises to the cytoplasm. The enzyme catalyses [thioredoxin]-disulfide + sulfite + AMP + 2 H(+) = adenosine 5'-phosphosulfate + [thioredoxin]-dithiol. Its pathway is sulfur metabolism; hydrogen sulfide biosynthesis; sulfite from sulfate. Its function is as follows. Catalyzes the formation of sulfite from adenosine 5'-phosphosulfate (APS) using thioredoxin as an electron donor. In Burkholderia cepacia (Pseudomonas cepacia), this protein is Adenosine 5'-phosphosulfate reductase.